Consider the following 412-residue polypeptide: Serine hydroxymethyltransferase (412 aa).

Residues Leu-117 and 121–123 (GHL) each bind (6S)-5,6,7,8-tetrahydrofolate. Lys-226 carries the post-translational modification N6-(pyridoxal phosphate)lysine.

Belongs to the SHMT family. Homodimer. Pyridoxal 5'-phosphate serves as cofactor.

It localises to the cytoplasm. It carries out the reaction (6R)-5,10-methylene-5,6,7,8-tetrahydrofolate + glycine + H2O = (6S)-5,6,7,8-tetrahydrofolate + L-serine. Its pathway is one-carbon metabolism; tetrahydrofolate interconversion. It participates in amino-acid biosynthesis; glycine biosynthesis; glycine from L-serine: step 1/1. Its function is as follows. Catalyzes the reversible interconversion of serine and glycine with tetrahydrofolate (THF) serving as the one-carbon carrier. This reaction serves as the major source of one-carbon groups required for the biosynthesis of purines, thymidylate, methionine, and other important biomolecules. Also exhibits THF-independent aldolase activity toward beta-hydroxyamino acids, producing glycine and aldehydes, via a retro-aldol mechanism. This Natranaerobius thermophilus (strain ATCC BAA-1301 / DSM 18059 / JW/NM-WN-LF) protein is Serine hydroxymethyltransferase.